The following is a 283-amino-acid chain: 2-dehydro-3-deoxyphosphooctonate aldolase (283 aa).

It belongs to the KdsA family.

It is found in the cytoplasm. It carries out the reaction D-arabinose 5-phosphate + phosphoenolpyruvate + H2O = 3-deoxy-alpha-D-manno-2-octulosonate-8-phosphate + phosphate. It participates in carbohydrate biosynthesis; 3-deoxy-D-manno-octulosonate biosynthesis; 3-deoxy-D-manno-octulosonate from D-ribulose 5-phosphate: step 2/3. The protein operates within bacterial outer membrane biogenesis; lipopolysaccharide biosynthesis. The polypeptide is 2-dehydro-3-deoxyphosphooctonate aldolase (Synechococcus sp. (strain WH7803)).